The sequence spans 473 residues: MWGFAGGRLFGIFSAPVLVAVVCCAQSVNDPGNMSFVKETVDKLLKGYDIRLRPDFGGPPVCVGMNIDIASIDMVSEVNMDYTLTMYFQQYWRDKRLAYSGIPLNLTLDNRVADQLWVPDTYFLNDKKSFVHGVTVKNRMIRLHPDGTVLYGLRITTTAACMMDLRRYPLDEQNCTLEIESYGYTTDDIEFYWRGGDKAVTGVERIELPQFSIVEHRLVSRNVVFATGAYPRLSLSFRLKRNIGYFILQTYMPSILITILSWVSFWINYDASAARVALGITTVLTMTTINTHLRETLPKIPYVKAIDMYLMGCFVFVFLALLEYAFVNYIFFGRGPQRQKKLAEKTAKAKNDRSKSEINRVDAHGNILLAPMDVHNEMNEVAGSVGDTRNSAISFDNSGIQYRKQSMPKEGHGRYMGDRSIPHKKTHLRRRSSQLKIKIPDLTDVNAIDRWSRIVFPFTFSLFNLVYWLYYVN.

A signal peptide spans 1-25 (MWGFAGGRLFGIFSAPVLVAVVCCA). Over 26–246 (QSVNDPGNMS…FRLKRNIGYF (221 aa)) the chain is Extracellular. N-linked (GlcNAc...) asparagine glycans are attached at residues N33 and N105. Y122 serves as a coordination point for histamine. Residues C161 and C175 are joined by a disulfide bond. An N-linked (GlcNAc...) asparagine glycan is attached at N174. 4-aminobutanoate-binding residues include E180, Y182, and T227. Histamine contacts are provided by residues 181–182 (SY) and T227. The chain crosses the membrane as a helical span at residues 247–267 (ILQTYMPSILITILSWVSFWI). Over 268 to 271 (NYDA) the chain is Cytoplasmic. The chain crosses the membrane as a helical span at residues 272-292 (SAARVALGITTVLTMTTINTH). Topologically, residues 293–304 (LRETLPKIPYVK) are extracellular. The chain crosses the membrane as a helical span at residues 305–328 (AIDMYLMGCFVFVFLALLEYAFVN). The Cytoplasmic portion of the chain corresponds to 329–447 (YIFFGRGPQR…KIPDLTDVNA (119 aa)). A helical membrane pass occupies residues 448-470 (IDRWSRIVFPFTFSLFNLVYWLY). The Extracellular portion of the chain corresponds to 471-473 (YVN).

It belongs to the ligand-gated ion channel (TC 1.A.9) family. Gamma-aminobutyric acid receptor (TC 1.A.9.5) subfamily. GABRB3 sub-subfamily. Heteropentamer, formed by a combination of alpha (GABRA1-6), beta (GABRB1-3), gamma (GABRG1-3), delta (GABRD), epsilon (GABRE), rho (GABRR1-3), pi (GABRP) and theta (GABRQ) chains, each subunit exhibiting distinct physiological and pharmacological properties. Can form functional homopentamers (in vitro). Interacts with UBQLN1. May interact with KIF21B. Identified in a complex of 720 kDa composed of LHFPL4, NLGN2, GABRA1, GABRB2, GABRG2 and GABRB3. Interacts with LHFPL4. Interacts with GIT1; this interaction is required for synaptic GABRB3 surface stability and inhibitory synapse strength.

The protein resides in the postsynaptic cell membrane. Its subcellular location is the cell membrane. The protein localises to the cytoplasmic vesicle membrane. The catalysed reaction is chloride(in) = chloride(out). Potentiated by histamine. In terms of biological role, beta subunit of the heteropentameric ligand-gated chloride channel gated by gamma-aminobutyric acid (GABA), a major inhibitory neurotransmitter in the brain. GABA-gated chloride channels, also named GABA(A) receptors (GABAAR), consist of five subunits arranged around a central pore and contain GABA active binding site(s) located at the alpha and beta subunit interface(s). GABAARs containing beta-3/GABRB3 subunit are found at both synaptic and extrasynaptic sites. When activated by GABA, GABAARs selectively allow the flow of chloride anions across the cell membrane down their electrochemical gradient. Chloride influx into the postsynaptic neuron following GABAAR opening decreases the neuron ability to generate a new action potential, thereby reducing nerve transmission. GABAARs containing alpha-1 and beta-3 subunits exhibit synaptogenic activity; the gamma-2 subunit being necessary but not sufficient to induce rapid synaptic contacts formation. Extrasynaptic beta-3 receptors contribute to the tonic GABAergic inhibition. GABAARs containing alpha-1, beta-3 and epsilon subunits may permit spontaneous chloride channel activity while preserving the structural information required for GABA-gated openings. Beta-containing GABAARs can simultaneously bind GABA and histamine where histamine binds at the interface of two neighboring beta subunits, which may be involved in the regulation of sleep and wakefulness. Plays an important role in somatosensation and in the production of antinociception. The sequence is that of Gamma-aminobutyric acid receptor subunit beta-3 from Mus musculus (Mouse).